The primary structure comprises 373 residues: MNLLNMQPKRSEQPAMFEENRASSQEGQDLEVMYKKLHQLQARLSRSVLSEAIKEFEENLRCLFHEAKLLLCSTRTKYRQSWFGSSNEFGSSDERRIIKTSCCIIESTNTILNFLSFLEKNRGLPFGGDQRLQQAAYKGQQFAFRLLRSLTLHKAAQEVPGKDFGLVYGKDVYVLNGHILHRSKQEIVGQAGGRNWHVDHTLHPLRRVPGTPWHKFFGNLEVGDDKQLRLFDDDAAVDSYRVGPQKFFVVIPETAEFILDEVSSEHQRVATIHTENGHVQPPAPTSIQQEALLRKLDFAMTTSLPGYVVEGQPEIVFHHEGLRQIPVDYSQERPLSILSHVFTRPALWGEGLELADHFDPRDGVQQEEHIYYI.

The tract at residues 1–22 (MNLLNMQPKRSEQPAMFEENRA) is disordered.

This sequence to P.anserina SMR1.

Its function is as follows. Required, together with mating-type protein A-3, for efficient ascospore formation. The sequence is that of Mating-type protein A-2 (matA-2) from Neurospora crassa (strain ATCC 24698 / 74-OR23-1A / CBS 708.71 / DSM 1257 / FGSC 987).